A 140-amino-acid polypeptide reads, in one-letter code: FlaA locus uncharacterized protein YlxG (140 aa).

The disordered stretch occupies residues 1–21; it reads MTSISSEYKLPEKTNTVSTNN.

This sequence belongs to the FlgD family.

This Bacillus subtilis (strain 168) protein is FlaA locus uncharacterized protein YlxG (ylxG).